Here is a 500-residue protein sequence, read N- to C-terminus: Lysine--tRNA ligase (500 aa).

Mg(2+) is bound by residues Glu-410 and Glu-417.

The protein belongs to the class-II aminoacyl-tRNA synthetase family. In terms of assembly, homodimer. Mg(2+) is required as a cofactor.

It is found in the cytoplasm. The catalysed reaction is tRNA(Lys) + L-lysine + ATP = L-lysyl-tRNA(Lys) + AMP + diphosphate. The chain is Lysine--tRNA ligase from Pseudomonas putida (strain ATCC 47054 / DSM 6125 / CFBP 8728 / NCIMB 11950 / KT2440).